Here is a 464-residue protein sequence, read N- to C-terminus: Glycosyl hydrolase family 109 protein 1 (464 aa).

The N-terminal stretch at 1–16 (MFKHLNALFIGLALFA) is a signal peptide. Cysteine 17 carries N-palmitoyl cysteine lipidation. A lipid anchor (S-diacylglycerol cysteine) is attached at cysteine 17. NAD(+)-binding positions include 63–64 (MR), aspartate 85, 134–137 (WKHH), 154–155 (EV), and asparagine 183. Substrate contacts are provided by residues tyrosine 212, arginine 228, 240 to 243 (YATH), and tyrosine 318. Tyrosine 240 provides a ligand contact to NAD(+).

The protein belongs to the Gfo/Idh/MocA family. Glycosyl hydrolase 109 subfamily. It depends on NAD(+) as a cofactor.

It is found in the cell membrane. Functionally, glycosidase. Has no alpha-N-acetylgalactosaminidase activity. This chain is Glycosyl hydrolase family 109 protein 1, found in Bacteroides fragilis (strain ATCC 25285 / DSM 2151 / CCUG 4856 / JCM 11019 / LMG 10263 / NCTC 9343 / Onslow / VPI 2553 / EN-2).